Reading from the N-terminus, the 74-residue chain is MADTEKLKMLGKIVEVLQGGNFRVQLENGITIMSHVSGKMRVNKINILPGDTVDVELSPYDLTRGRITYRHRDN.

Positions methionine 1–arginine 72 constitute an S1-like domain.

The protein belongs to the IF-1 family. As to quaternary structure, component of the 30S ribosomal translation pre-initiation complex which assembles on the 30S ribosome in the order IF-2 and IF-3, IF-1 and N-formylmethionyl-tRNA(fMet); mRNA recruitment can occur at any time during PIC assembly.

The protein resides in the cytoplasm. In terms of biological role, one of the essential components for the initiation of protein synthesis. Stabilizes the binding of IF-2 and IF-3 on the 30S subunit to which N-formylmethionyl-tRNA(fMet) subsequently binds. Helps modulate mRNA selection, yielding the 30S pre-initiation complex (PIC). Upon addition of the 50S ribosomal subunit IF-1, IF-2 and IF-3 are released leaving the mature 70S translation initiation complex. This Ureaplasma parvum serovar 3 (strain ATCC 700970) protein is Translation initiation factor IF-1.